The following is a 758-amino-acid chain: Microtubule-associated protein tau (758 aa).

Positions 1-26 (MAEPRQEFEVMEDHAGTYGLGDRKDQ) are enriched in basic and acidic residues. A disordered region spans residues 1–573 (MAEPRQEFEV…PVPMPDLKNV (573 aa)). Ala-2 is subject to N-acetylalanine. Phosphotyrosine; by FYN is present on Tyr-18. Tyr-29 is modified (phosphotyrosine). Lys-44 is covalently cross-linked (Glycyl lysine isopeptide (Lys-Gly) (interchain with G-Cter in ubiquitin)). 2 positions are modified to phosphoserine: Ser-46 and Ser-61. The segment covering 61-71 (SETSDAKSTPT) has biased composition (polar residues). Phosphothreonine is present on residues Thr-69 and Thr-71. An N-linked (Glc) (glycation) lysine; in PHF-tau; in vitro glycan is attached at Lys-87. Thr-111 is modified (phosphothreonine). 2 stretches are compositionally biased toward basic and acidic residues: residues 179-189 (EGGRHAPELLK) and 207-216 (GGKERPGSKE). A Phosphoserine; by SGK1 modification is found at Ser-214. Residues 217–228 (EVDEDRDVDESS) show a composition bias toward acidic residues. Residues 314-323 (EQAHSEEHLG) are compositionally biased toward basic and acidic residues. Residues 324-340 (RAAFPGAPGEGPEARGP) are compositionally biased toward low complexity. Composition is skewed to basic and acidic residues over residues 344 to 356 (EDTK…EPSE) and 381 to 393 (KSKD…DKKA). A glycan (N-linked (Glc) (glycation) lysine; in PHF-tau; in vitro) is linked at Lys-383. Over residues 442 to 453 (VSSVTSRTGSSG) the composition is skewed to low complexity. A compositionally biased stretch (basic and acidic residues) spans 455 to 466 (KEMKLKGADGKT). A glycan (N-linked (Glc) (glycation) lysine; in PHF-tau; in vitro) is linked at Lys-467. Residue Thr-470 is modified to Phosphothreonine; by PDPK1. An Omega-N-methylarginine modification is found at Arg-472. N-linked (Glc) (glycation) lysine; in PHF-tau; in vitro glycosylation is present at Lys-480. Lys-480 bears the N6,N6-dimethyllysine; alternate mark. At Lys-480 the chain carries N6-acetyllysine; alternate. Asn-484 carries the deamidated asparagine; in tau and PHF-tau; partial modification. Phosphothreonine is present on Thr-486. Residue Lys-491 is glycosylated (N-linked (Glc) (glycation) lysine; in PHF-tau; in vitro). Residues 491–503 (KTPPAPKTPPSSG) are compositionally biased toward pro residues. Thr-492 bears the Phosphothreonine mark. The residue at position 498 (Thr-498) is a Phosphothreonine; by PDPK1. Phosphoserine occurs at positions 502, 508, and 512. The segment covering 504-531 (EPPKSGDRSGYSSPGSPGTPGSRSRTPS) has biased composition (low complexity). Tyr-514 is subject to Phosphotyrosine; by TTBK1. 2 positions are modified to phosphoserine; by PDPK1 and TTBK1: Ser-515 and Ser-516. Ser-519 carries the post-translational modification Phosphoserine; by CK1, PDPK1 and TTBK1. Position 522 is a phosphothreonine; by CK1 and PDPK1 (Thr-522). A glycan (O-linked (GlcNAc) serine) is linked at Ser-525. Thr-529 is modified (phosphothreonine; by BRSK1, BRSK2, DYRK2 and PDPK1). Ser-531 carries the post-translational modification Phosphoserine; by PKA. Thr-534 bears the Phosphothreonine; by PDPK1 mark. N-linked (Glc) (glycation) lysine; in PHF-tau; in vitro glycosylation is present at Lys-542. Position 542 is an N6-acetyllysine (Lys-542). Phosphothreonine; by GSK3-beta and PDPK1 is present on Thr-548. A glycan (N-linked (Glc) (glycation) lysine; in PHF-tau; in vitro) is linked at Lys-551. Ser-552 is subject to Phosphoserine; by PDPK1. Position 554 is a phosphoserine; by PHK (Ser-554). Ser-555 carries O-linked (GlcNAc) serine glycosylation. 4 Tau/MAP repeats span residues 561 to 591 (QTAP…GGGK), 592 to 622 (VQII…GGGS), 623 to 653 (VQIV…GGGQ), and 654 to 685 (VEVK…GGGN). The segment at 561–685 (QTAPVPMPDL…NITHVPGGGN (125 aa)) is microtubule-binding domain. Lys-571 participates in a covalent cross-link: Glycyl lysine isopeptide (Lys-Gly) (interchain with G-Cter in ubiquitin); in PHF-tau. Residue Lys-576 is glycosylated (N-linked (Glc) (glycation) lysine; in PHF-tau; in vitro). An N6-acetyllysine; alternate modification is found at Lys-576. Lys-576 carries the post-translational modification N6-methyllysine; alternate. Residue Lys-576 forms a Glycyl lysine isopeptide (Lys-Gly) (interchain with G-Cter in ubiquitin); alternate linkage. Position 579 is a phosphoserine; by MARK1, MARK2, MARK3, MARK4, BRSK1, BRSK2 and PHK (Ser-579). Residue Lys-584 forms a Glycyl lysine isopeptide (Lys-Gly) (interchain with G-Cter in ubiquitin) linkage. Position 596 is a deamidated asparagine; in tau and PHF-tau; partial (Asn-596). Residues Lys-597 and Lys-598 are each glycosylated (N-linked (Glc) (glycation) lysine; in PHF-tau; in vitro). Lys-598 bears the N6-acetyllysine; alternate mark. Residue Lys-598 forms a Glycyl lysine isopeptide (Lys-Gly) (interchain with G-Cter in ubiquitin); alternate linkage. Position 602 is a phosphoserine; by PHK (Ser-602). Lys-607 is modified (N6-acetyllysine). Cys-608 and Cys-639 are joined by a disulfide. Position 610 is a phosphoserine (Ser-610). Lys-615 is modified (N6-acetyllysine; alternate). Residue Lys-615 forms a Glycyl lysine isopeptide (Lys-Gly) (interchain with G-Cter in ubiquitin); alternate linkage. Ser-622 bears the Phosphoserine; by PHK mark. Lys-628 carries the N6,N6-dimethyllysine; alternate modification. Lys-628, Lys-634, and Lys-638 each carry N6-acetyllysine; alternate. Lys-628 participates in a covalent cross-link: Glycyl lysine isopeptide (Lys-Gly) (interchain with G-Cter in ubiquitin); in PHF-tau. Glycyl lysine isopeptide (Lys-Gly) (interchain with G-Cter in ubiquitin); alternate cross-links involve residues Lys-634 and Lys-638. A Phosphoserine modification is found at Ser-641. 3 positions are modified to N6-acetyllysine; alternate: Lys-648, Lys-660, and Lys-664. Residues Lys-648, Lys-660, and Lys-664 each participate in a glycyl lysine isopeptide (Lys-Gly) (interchain with G-Cter in ubiquitin); alternate cross-link. Lys-664 carries an N-linked (Glc) (glycation) lysine; in PHF-tau; in vitro glycan. Arg-666 bears the Omega-N-methylarginine mark. Ser-669 is subject to Phosphoserine; by PHK. Residue Lys-670 is glycosylated (N-linked (Glc) (glycation) lysine; in PHF-tau; in vitro). A Glycyl lysine isopeptide (Lys-Gly) (interchain with G-Cter in ubiquitin); in PHF-tau cross-link involves residue Lys-670. Residue Ser-673 is modified to Phosphoserine. N-linked (Glc) (glycation) lysine; in PHF-tau; in vitro glycosylation occurs at Lys-686. N6-acetyllysine; alternate is present on Lys-686. Lys-686 is covalently cross-linked (Glycyl lysine isopeptide (Lys-Gly) (interchain with G-Cter in ubiquitin); alternate). Lys-692 is covalently cross-linked (Glycyl lysine isopeptide (Lys-Gly) (interchain with G-Cter in ubiquitin)). Lys-702 is subject to N6-acetyllysine; alternate. Residue Lys-702 forms a Glycyl lysine isopeptide (Lys-Gly) (interchain with G-Cter in ubiquitin); alternate linkage. Residue Tyr-711 is modified to Phosphotyrosine. Ser-713 is modified (phosphoserine; by CK1 and PDPK1). Residues 715 to 734 (VVSGDTSPRHLSNVSSTGSI) are disordered. Ser-717 is modified (phosphoserine; alternate). O-linked (GlcNAc) serine; alternate glycosylation is present at Ser-717. Residues 718 to 733 (GDTSPRHLSNVSSTGS) are compositionally biased toward polar residues. Position 720 is a phosphothreonine (Thr-720). The residue at position 721 (Ser-721) is a Phosphoserine; by CK1 and PDPK1. Ser-726 is subject to Phosphoserine. Ser-733 is modified (phosphoserine; by CaMK2 and TTBK1). Ser-739 is modified (phosphoserine; by PDPK1 and TTBK1). Thr-744 bears the Phosphothreonine; by TTBK1 mark.

In terms of assembly, interacts with MARK1, MARK2, MARK3 and MARK4. Interacts with PSMC2 through SQSTM1. Interacts with SQSTM1 when polyubiquitinated. Interacts with FKBP4. Binds to CSNK1D. Interacts with SGK1. Interacts with EPM2A; the interaction dephosphorylates MAPT at Ser-396. Interacts with PIN1. Interacts with LRRK2. Interacts with LRP1, leading to endocytosis; this interaction is reduced in the presence of LRPAP1/RAP. In terms of processing, phosphorylation at serine and threonine residues in S-P or T-P motifs by proline-directed protein kinases (PDPK1, CDK1, CDK5, GSK3, MAPK) (only 2-3 sites per protein in interphase, seven-fold increase in mitosis, and in the form associated with paired helical filaments (PHF-tau)), and at serine residues in K-X-G-S motifs by MAP/microtubule affinity-regulating kinase (MARK1, MARK2, MARK3 or MARK4), causing detachment from microtubules, and their disassembly. Phosphorylation decreases with age. Phosphorylation within tau/MAP's repeat domain or in flanking regions seems to reduce tau/MAP's interaction with, respectively, microtubules or plasma membrane components. Phosphorylation on Ser-610, Ser-622, Ser-641 and Ser-673 in several isoforms during mitosis. Phosphorylation at Ser-548 by GSK3B reduces ability to bind and stabilize microtubules. Phosphorylation at Ser-579 by BRSK1 and BRSK2 in neurons affects ability to bind microtubules and plays a role in neuron polarization. Phosphorylated at Ser-554, Ser-579, Ser-602, Ser-606 and Ser-669 by PHK. Phosphorylation at Ser-214 by SGK1 mediates microtubule depolymerization and neurite formation in hippocampal neurons. There is a reciprocal down-regulation of phosphorylation and O-GlcNAcylation. Phosphorylation on Ser-717 completely abolishes the O-GlcNAcylation on this site, while phosphorylation on Ser-713 and Ser-721 reduces glycosylation by a factor of 2 and 4 respectively. Phosphorylation on Ser-721 is reduced by about 41.5% by GlcNAcylation on Ser-717. Dephosphorylated at several serine and threonine residues by the serine/threonine phosphatase PPP5C. Post-translationally, polyubiquitinated. Requires functional TRAF6 and may provoke SQSTM1-dependent degradation by the proteasome. PHF-tau can be modified by three different forms of polyubiquitination. 'Lys-48'-linked polyubiquitination is the major form, 'Lys-6'-linked and 'Lys-11'-linked polyubiquitination also occur. O-glycosylated. O-GlcNAcylation content is around 8.2%. There is reciprocal down-regulation of phosphorylation and O-GlcNAcylation. Phosphorylation on Ser-717 completely abolishes the O-GlcNAcylation on this site, while phosphorylation on Ser-713 and Ser-721 reduces O-GlcNAcylation by a factor of 2 and 4 respectively. O-GlcNAcylation on Ser-717 decreases the phosphorylation on Ser-721 by about 41.5%. In terms of processing, glycation of PHF-tau, but not normal brain TAU/MAPT. Glycation is a non-enzymatic post-translational modification that involves a covalent linkage between a sugar and an amino group of a protein molecule forming ketoamine. Subsequent oxidation, fragmentation and/or cross-linking of ketoamine leads to the production of advanced glycation endproducts (AGES). Glycation may play a role in stabilizing PHF aggregation leading to tangle formation in AD. Expressed in neurons. Isoform PNS-tau is expressed in the peripheral nervous system while the others are expressed in the central nervous system.

It localises to the cytoplasm. The protein resides in the cytosol. Its subcellular location is the cell membrane. It is found in the cytoskeleton. The protein localises to the cell projection. It localises to the axon. The protein resides in the dendrite. Its subcellular location is the secreted. Promotes microtubule assembly and stability, and might be involved in the establishment and maintenance of neuronal polarity. The C-terminus binds axonal microtubules while the N-terminus binds neural plasma membrane components, suggesting that tau functions as a linker protein between both. Axonal polarity is predetermined by TAU/MAPT localization (in the neuronal cell) in the domain of the cell body defined by the centrosome. The short isoforms allow plasticity of the cytoskeleton whereas the longer isoforms may preferentially play a role in its stabilization. This Homo sapiens (Human) protein is Microtubule-associated protein tau.